The chain runs to 521 residues: MSVLSWAFTVAWFTLWMLMLYLTNEMKLKFTDAAAIVNVFAGVSAIGHLGMQFLVDAFIGHFWMLCLSTLAFSFGFGFLAISASPILSGNGQKGLFYVALTVISVGIFGRSISLGVFTEDQLEDGRNKGNPAKLVSFVIGNVGNFVFLLLAAIAMPQISPWFVRFTIPSGCEVLAMLIFISGACSYKRVKPGGSPLTTVFRVFMASASKMSCAYSNNSSQLYEKAECDQDIKPHTSSLRYLDRAAMILQTESLEQQRKNRWKLCRVTEVEQTKSVIRTVPLFATSLISGIVFSLGNTFFLEQANHMDSKFGSWNLPLPLLLLFSEAARLGSRELCVMAAKRHAIDFPESPKQTKTPYGIPVSIILSIFCCSIAAHVESRRLKVVSTQGLLHETVPMSVFWLLPQYILLGSITGIYENSFALYLEETVPEELSQYMVLLNVGVCGVGIMSNIALVSLVGSVSGGKWFQDTINKSRVDNYYWVITVFCMFNLLLYFIVTYRYTVCNKKDGATQENDRRIIASV.

Helical transmembrane passes span 3-23, 35-55, 62-82, 96-116, 134-154, 165-185, 279-299, 310-327, 356-376, 394-414, 440-460, and 478-498; these read VLSW…LYLT, AIVN…QFLV, FWML…LAIS, FYVA…SLGV, LVSF…AAIA, FTIP…GACS, VPLF…NTFF, FGSW…SEAA, PYGI…AAHV, VPMS…ITGI, VGVC…VGSV, and YYWV…IVTY.

It belongs to the major facilitator superfamily. Proton-dependent oligopeptide transporter (POT/PTR) (TC 2.A.17) family. Expressed in roots.

It localises to the membrane. The protein is Protein NRT1/ PTR FAMILY 5.5 (NPF5.5) of Arabidopsis thaliana (Mouse-ear cress).